The primary structure comprises 382 residues: Small ribosomal subunit protein bS1 homolog (382 aa).

S1 motif domains lie at Gly16–Arg84, Lys102–Arg167, Gly188–Lys256, and Gly273–Arg342. Phosphoserine is present on Ser243.

Belongs to the bacterial ribosomal protein bS1 family.

Plays a role in sporulation. Cannot be expressed in wild-type E.coli, does not complement an E.coli rpsA deletion. The protein is Small ribosomal subunit protein bS1 homolog of Bacillus subtilis (strain 168).